Consider the following 205-residue polypeptide: MNSLDYNKTNFLKSYSKITDIDIQNGIEIAFIGYSNTGKSSAINALTNQKKLARFSKTPGRTQLINFFEVVSGFRIVDLPGYGYSQAPLLVRSKWQKKVYDYLEKREQIKLFVLLMDIRYPLKKLDQKIISIAVQKKISILVLLTKCDKIKINHQKNQADMVFKKLNVLLDSFEIILFSSYKKIGIEKLKLSLNSSYKKHFILNR.

An EngB-type G domain is found at 25-199 (NGIEIAFIGY…KLSLNSSYKK (175 aa)). Residues 33 to 40 (GYSNTGKS), 60 to 64 (GRTQL), 78 to 81 (DLPG), 145 to 148 (TKCD), and 178 to 180 (FSS) each bind GTP. Residues serine 40 and threonine 62 each coordinate Mg(2+).

The protein belongs to the TRAFAC class TrmE-Era-EngA-EngB-Septin-like GTPase superfamily. EngB GTPase family. Mg(2+) is required as a cofactor.

Functionally, necessary for normal cell division and for the maintenance of normal septation. The polypeptide is Probable GTP-binding protein EngB (Buchnera aphidicola subsp. Acyrthosiphon pisum (strain 5A)).